The chain runs to 292 residues: Glycine--tRNA ligase alpha subunit (292 aa).

The protein belongs to the class-II aminoacyl-tRNA synthetase family. Tetramer of two alpha and two beta subunits.

The protein localises to the cytoplasm. The catalysed reaction is tRNA(Gly) + glycine + ATP = glycyl-tRNA(Gly) + AMP + diphosphate. The polypeptide is Glycine--tRNA ligase alpha subunit (Pelobacter propionicus (strain DSM 2379 / NBRC 103807 / OttBd1)).